A 562-amino-acid polypeptide reads, in one-letter code: Dihydroxy-acid dehydratase (562 aa).

Asp78 contacts Mg(2+). Cys119 is a binding site for [2Fe-2S] cluster. Residues Asp120 and Lys121 each coordinate Mg(2+). An N6-carboxylysine modification is found at Lys121. Residue Cys192 participates in [2Fe-2S] cluster binding. Glu450 provides a ligand contact to Mg(2+). Residue Ser476 is the Proton acceptor of the active site.

The protein belongs to the IlvD/Edd family. Homodimer. The cofactor is [2Fe-2S] cluster. It depends on Mg(2+) as a cofactor.

The enzyme catalyses (2R)-2,3-dihydroxy-3-methylbutanoate = 3-methyl-2-oxobutanoate + H2O. The catalysed reaction is (2R,3R)-2,3-dihydroxy-3-methylpentanoate = (S)-3-methyl-2-oxopentanoate + H2O. It functions in the pathway amino-acid biosynthesis; L-isoleucine biosynthesis; L-isoleucine from 2-oxobutanoate: step 3/4. The protein operates within amino-acid biosynthesis; L-valine biosynthesis; L-valine from pyruvate: step 3/4. Its function is as follows. Functions in the biosynthesis of branched-chain amino acids. Catalyzes the dehydration of (2R,3R)-2,3-dihydroxy-3-methylpentanoate (2,3-dihydroxy-3-methylvalerate) into 2-oxo-3-methylpentanoate (2-oxo-3-methylvalerate) and of (2R)-2,3-dihydroxy-3-methylbutanoate (2,3-dihydroxyisovalerate) into 2-oxo-3-methylbutanoate (2-oxoisovalerate), the penultimate precursor to L-isoleucine and L-valine, respectively. The chain is Dihydroxy-acid dehydratase from Nautilia profundicola (strain ATCC BAA-1463 / DSM 18972 / AmH).